The following is a 1077-amino-acid chain: Serine/threonine-protein kinase sel-5 (1077 aa).

The Protein kinase domain maps to V47 to E317. Residues I53–V61 and K75 each bind ATP. The active-site Proton acceptor is D178. 4 disordered regions span residues M347 to S444, G488 to V554, E616 to F813, and L920 to L1077. Over residues I369–T399 the composition is skewed to polar residues. The span at D491–D515 shows a compositional bias: basic and acidic residues. The segment covering S541–V554 has biased composition (low complexity). Residues L638 to P648 show a composition bias toward polar residues. Over residues T655 to E679 the composition is skewed to acidic residues. 2 stretches are compositionally biased toward basic and acidic residues: residues D697–S708 and D739–D751. Positions E770–H780 are enriched in acidic residues. The span at G799–T810 shows a compositional bias: polar residues. Residues T927 to K936 show a composition bias toward pro residues. Over residues A941–T950 the composition is skewed to polar residues. Residues K960–E969 are compositionally biased toward basic residues. The span at K970–S989 shows a compositional bias: basic and acidic residues. Polar residues predominate over residues L1054–Q1067.

It belongs to the protein kinase superfamily. Ser/Thr protein kinase family. It depends on Mg(2+) as a cofactor.

It localises to the cytoplasm. The catalysed reaction is L-seryl-[protein] + ATP = O-phospho-L-seryl-[protein] + ADP + H(+). The enzyme catalyses L-threonyl-[protein] + ATP = O-phospho-L-threonyl-[protein] + ADP + H(+). Functionally, serine/threonine-protein kinase which may play a role in lin-12-mediated cell-fate decisions. The chain is Serine/threonine-protein kinase sel-5 from Caenorhabditis elegans.